Consider the following 98-residue polypeptide: NADH-ubiquinone oxidoreductase chain 4L (98 aa).

Transmembrane regions (helical) follow at residues 2–22 (PSIF…MLIF), 37–57 (MLSM…TMSF), and 61–81 (ILLL…LVTV).

It belongs to the complex I subunit 4L family. As to quaternary structure, core subunit of respiratory chain NADH dehydrogenase (Complex I) which is composed of 45 different subunits.

The protein resides in the mitochondrion inner membrane. The catalysed reaction is a ubiquinone + NADH + 5 H(+)(in) = a ubiquinol + NAD(+) + 4 H(+)(out). Its function is as follows. Core subunit of the mitochondrial membrane respiratory chain NADH dehydrogenase (Complex I) which catalyzes electron transfer from NADH through the respiratory chain, using ubiquinone as an electron acceptor. Part of the enzyme membrane arm which is embedded in the lipid bilayer and involved in proton translocation. In Varecia rubra (Red ruffed lemur), this protein is NADH-ubiquinone oxidoreductase chain 4L (MT-ND4L).